Here is an 809-residue protein sequence, read N- to C-terminus: DNA replication helicase (809 aa).

An ATP-binding site is contributed by 72-79 (GTAGAGKS).

It belongs to the herpesviridae helicase family. As to quaternary structure, associates with the primase and the primase-associated factor to form the helicase-primase complex.

It localises to the host nucleus. Its function is as follows. Component of the helicase/primase complex. Unwinds the DNA at the replication forks and generates single-stranded DNA for both leading and lagging strand synthesis. The primase synthesizes short RNA primers on the lagging strand that the polymerase elongates using dNTPs. Possesses helicase-like motifs and therefore may act as the helicase subunit of the complex. This chain is DNA replication helicase, found in Epstein-Barr virus (strain B95-8) (HHV-4).